Consider the following 429-residue polypeptide: Histidine--tRNA ligase (429 aa).

It belongs to the class-II aminoacyl-tRNA synthetase family. In terms of assembly, homodimer.

The protein resides in the cytoplasm. The catalysed reaction is tRNA(His) + L-histidine + ATP = L-histidyl-tRNA(His) + AMP + diphosphate + H(+). This Desulfotalea psychrophila (strain LSv54 / DSM 12343) protein is Histidine--tRNA ligase.